Consider the following 1507-residue polypeptide: Transient receptor potential cation channel subfamily M member 2 (1507 aa).

Over residues 1-11 (MEPLDQRRTDS) the composition is skewed to basic and acidic residues. The interval 1–24 (MEPLDQRRTDSDQEEGFGVQSRRA) is disordered. The Cytoplasmic portion of the chain corresponds to 1 to 751 (MEPLDQRRTD…WWGQLCVDNG (751 aa)). Residues T173, N178, R301, G332, and T335 each coordinate ADP-D-ribose. Residue T739 is modified to Phosphothreonine. Residues 752 to 768 (LWRIILCMLAFPLLFTG) lie within the membrane without spanning it. At 769 to 793 (FISFREKRLQALCRLARVRAFFNAP) the chain is on the cytoplasmic side. Residues 794-814 (VVIFYLNILSYFAFLCLFAYV) form a helical membrane-spanning segment. Residues 815–825 (LMVDFQPSPSW) are Extracellular-facing. The helical transmembrane segment at 826 to 846 (CEYLIYLWLFSLVCEETRQLF) threads the bilayer. Ca(2+)-binding residues include E841 and Q844. The Cytoplasmic portion of the chain corresponds to 847–865 (YDPDGCGLMKMASLYFSDF). The helical transmembrane segment at 866 to 886 (WNKLDVGAILLFIAGLTCRLI) threads the bilayer. N867 is a Ca(2+) binding site. Residues 887–894 (PATLYPGR) are Extracellular-facing. A helical transmembrane segment spans residues 895-915 (IILSLDFIMFCLRLMHIFTIS). Residues 916 to 927 (KTLGPKIIIVKR) are Cytoplasmic-facing. The chain crosses the membrane as a helical span at residues 928 to 948 (MMKDVFFFLFLLAVWVVSFGV). Topologically, residues 949 to 968 (AKQAILIHNESRVDWIFRGV) are extracellular. Residues 969–983 (IYHSYLTIFGQIPTY) constitute an intramembrane region (pore-forming). The Selectivity filter motif lies at 977-980 (FGQI). The Extracellular portion of the chain corresponds to 984 to 1020 (IDGVNFSMDQCSPNGTDPYKPKCPESDWTGQAPAFPE). The cysteines at positions 994 and 1006 are disulfide-linked. The chain crosses the membrane as a helical span at residues 1021–1042 (WLTVTLLCLYLLFANILLLNLL). At 1043–1077 (IAMFNYTFQEVQEHTDQIWKFQRHDLIEEYHGRPP) the chain is on the cytoplasmic side. E1071 lines the Ca(2+) pocket. Residues 1078–1096 (APPPLILLSHLQLLIKRIV) lie within the membrane without spanning it. At 1097-1507 (LKIPAKRHKQ…KVASLFGAHF (411 aa)) the chain is on the cytoplasmic side. The 152-residue stretch at 1351–1502 (RWKRNQGGGI…KKILQKVASL (152 aa)) folds into the Nudix hydrolase domain. S1379 provides a ligand contact to ADP-D-ribose. Positions 1387 to 1408 (GSREPGKMLPRKLKQVLQQEYW) match the Nudix box motif. ADP-D-ribose is bound by residues D1428, R1430, Y1489, and N1491.

This sequence belongs to the transient receptor (TC 1.A.4) family. LTrpC subfamily. TRPM2 sub-subfamily. Homotetramer. In terms of processing, phosphorylation of TRPM2 at Thr-739 by protein kinase C (PKC) counteracts the effect of cytosolic Ca(2+) and elevates the temperature threshold. In terms of tissue distribution, detected in pancreas beta-cells. Detected in fetal brain cortex neurons (at protein level).

It localises to the cell membrane. It is found in the perikaryon. Its subcellular location is the cell projection. The protein localises to the cytoplasmic vesicle. The protein resides in the lysosome. The enzyme catalyses Ca(2+)(in) = Ca(2+)(out). The catalysed reaction is Na(+)(in) = Na(+)(out). With respect to regulation, activated by intracellular ADP-ribose, beta-NAD (NAD(+)) and similar compounds, and by oxidative stress caused by reactive oxygen or nitrogen species. Ca(2+) and PI(4,5)P2 are required for channel opening by ADP-ribose. Activation by ADP-ribose and beta-NAD is strongly increased by moderate heat (35 to 40 degrees Celsius). Likewise, reactive oxygen species lower the threshold for activation by moderate heat (37 degrees Celsius). Activated by moderate heat (35 to 40 degrees Celsius). Inactivated by exposure to extracellular pH between 4.0 and 6.5; irreversibly inactivated when open channels are exposed to extracellular pH between 4.0 and 6.5, while pre-exposure of closed channels to extracellular pH 5.5 gives rise to currents that rapidly inactivate, but protects against irreversible inactivation. Inactivated by intracellular ATP. Activated by arachidonic acid. Inhibited by 2-aminoethyl diphenylborinate (2-APB). Functionally, nonselective, voltage-independent cation channel that mediates Na(+) and Ca(2+) influx, leading to increased cytoplasmic Ca(2+) levels. Functions as a ligand-gated ion channel gated by intracellular adenosine diphosphate ribose (ADP-ribose), Ca(2+), warm temperature, and oxidative stress. The precise physiological activators are under debate; the true, physiological activators may be ADP-ribose and ADP-ribose-2'-phosphate. Binding of ADP-ribose to the cytoplasmic Nudix domain causes a conformation change; the channel is primed but still requires Ca(2+) binding to trigger channel opening. Extracellular Ca(2+) passes through the channel and increases channel activity. Also contributes to Ca(2+) release from intracellular stores in response to ADP-ribose. Plays a role in numerous processes that involve signaling via intracellular Ca(2+) levels. Besides, mediates the release of lysosomal Zn(2+) stores in response to reactive oxygen species, leading to increased cytosolic Zn(2+) levels. Plays a role in insulin secretion, a process that requires increased cytoplasmic Ca(2+) levels. Required for normal IFNG and cytokine secretion and normal innate immune immunity in response to bacterial infection. Required for normal phagocytosis and cytokine release by macrophages exposed to zymosan (in vitro). Plays a role in dendritic cell differentiation and maturation, and in dendritic cell chemotaxis via its role in regulating cytoplasmic Ca(2+) levels. Plays a role in the regulation of the reorganization of the actin cytoskeleton and filopodia formation in response to reactive oxygen species via its function in increasing cytoplasmic Ca(2+) and Zn(2+) levels. Confers susceptibility to cell death following oxidative stress. The protein is Transient receptor potential cation channel subfamily M member 2 of Rattus norvegicus (Rat).